Reading from the N-terminus, the 264-residue chain is Dehydrodolichyl diphosphate synthase complex subunit SPAC4D7.04c (264 aa).

The protein belongs to the UPP synthase family. Forms an active dehydrodolichyl diphosphate synthase complex with nus1. Requires Mg(2+) as cofactor.

The protein localises to the endoplasmic reticulum membrane. It carries out the reaction n isopentenyl diphosphate + (2E,6E)-farnesyl diphosphate = a di-trans,poly-cis-polyprenyl diphosphate + n diphosphate. It functions in the pathway protein modification; protein glycosylation. With nus1, forms the dehydrodolichyl diphosphate synthase (DDS) complex, an essential component of the dolichol monophosphate (Dol-P) biosynthetic machinery. Adds multiple copies of isopentenyl pyrophosphate (IPP) to farnesyl pyrophosphate (FPP) to produce dehydrodolichyl diphosphate (Dedol-PP), a precursor of dolichol which is utilized as a sugar carrier in protein glycosylation in the endoplasmic reticulum (ER). This Schizosaccharomyces pombe (strain 972 / ATCC 24843) (Fission yeast) protein is Dehydrodolichyl diphosphate synthase complex subunit SPAC4D7.04c.